A 278-amino-acid chain; its full sequence is Indole-3-glycerol phosphate synthase (278 aa).

It belongs to the TrpC family.

It carries out the reaction 1-(2-carboxyphenylamino)-1-deoxy-D-ribulose 5-phosphate + H(+) = (1S,2R)-1-C-(indol-3-yl)glycerol 3-phosphate + CO2 + H2O. The protein operates within amino-acid biosynthesis; L-tryptophan biosynthesis; L-tryptophan from chorismate: step 4/5. The sequence is that of Indole-3-glycerol phosphate synthase from Pseudomonas fluorescens (strain SBW25).